The following is a 384-amino-acid chain: DNA replication and repair protein RecF (384 aa).

Residue 43 to 50 (GENGSGKT) coordinates ATP.

The protein belongs to the RecF family.

The protein resides in the cytoplasm. In terms of biological role, the RecF protein is involved in DNA metabolism; it is required for DNA replication and normal SOS inducibility. RecF binds preferentially to single-stranded, linear DNA. It also seems to bind ATP. This chain is DNA replication and repair protein RecF, found in Brucella suis biovar 1 (strain 1330).